We begin with the raw amino-acid sequence, 492 residues long: MDPSKYRPSSAYDTPFLTTNAGGPVYNNVSSLTVGPRGPVLLEDYYLIEKLATFDREKIPERVVHARGASAKGFFEVTHDISHLTCADFLRAPGAQTPVICRFSTVVHERGSPESIRDIRGFAVKFYTREGNFDLVGNNVPVFFNRDAKSFPDTIRALKPNPKSHIQENWRILDFFSFLPESLHTFAFFYDDVCLPTDYRHMEGFGVHAYQLINKEGKAHYVKFHWKPTCGVKCMSEEEAIRVGGTNHSHATKDLYDSIAAGNYPEWKLFIQTMDPEDVDKFDFDPLDVTKTWPEDLLPLIPVGRLVLNRNIDNFFAENEQLAFNPGHIVPGIYYSEDKLLQTRIFAYADTQRHRIGPNYMQLPVNAPKCGHHNNHRDGAMNMTHRDEEVDYLPSRFDPCRPAEQYPIPSCVLNGRRTNCVIPKENNFKQAGERYRSWEPDRQDRYINKWVESLSDPRVTHEIRSIWISYLSQADKSCGQKVASRLTVKPTM.

Residues His65 and Asn138 contribute to the active site. Tyr348 lines the heme pocket.

It belongs to the catalase family. Homotetramer. Heme serves as cofactor.

It is found in the peroxisome. The enzyme catalyses 2 H2O2 = O2 + 2 H2O. Functionally, occurs in almost all aerobically respiring organisms and serves to protect cells from the toxic effects of hydrogen peroxide. The sequence is that of Catalase isozyme 1 (CAT1) from Solanum lycopersicum (Tomato).